We begin with the raw amino-acid sequence, 1033 residues long: Isoleucine--tRNA ligase 2 (1033 aa).

The short motif at 47 to 57 is the 'HIGH' region element; that stretch reads PTANGLPHVGH. Positions 590-594 match the 'KMSKS' region motif; that stretch reads KMSKS. An ATP-binding site is contributed by Lys593.

The protein belongs to the class-I aminoacyl-tRNA synthetase family. IleS type 2 subfamily. Monomer. Zn(2+) serves as cofactor.

It is found in the cytoplasm. The catalysed reaction is tRNA(Ile) + L-isoleucine + ATP = L-isoleucyl-tRNA(Ile) + AMP + diphosphate. In terms of biological role, catalyzes the attachment of isoleucine to tRNA(Ile). As IleRS can inadvertently accommodate and process structurally similar amino acids such as valine, to avoid such errors it has two additional distinct tRNA(Ile)-dependent editing activities. One activity is designated as 'pretransfer' editing and involves the hydrolysis of activated Val-AMP. The other activity is designated 'posttransfer' editing and involves deacylation of mischarged Val-tRNA(Ile). The sequence is that of Isoleucine--tRNA ligase 2 from Bacillus thuringiensis subsp. konkukian (strain 97-27).